A 383-amino-acid polypeptide reads, in one-letter code: MDSGDFSPMQSNFSLGFMSFEDIPEDARTTEMIDKIVFEEDKEYDHTQDSFRYGRVTTGVSYNLVTGKIPKTVFEQVKAKDDENDNVEFEMEHLEDKETAHKTQTFDELYESQMPKYFDYQSNFSDVNGIWTLLFDQNHYEKMSTFELQAAICAALNSKHFMMICVGIDAFNAVTGVEMSAKDRVVFRMALTRAVAGEFQPPLVKVAPKQLTGVSPMKRDISEVTSSIDVLFVPVIGVTDEVENNRFLIVVRVKEISDKVYQISSGRIYNEQEGRVVEMSDMNEAFHKLIVEKSISDIQTRRGSMFMLEPEPFLEDSAVIFTESNEIPSENHEISRVHVKNCTERSLSQSLLNLLDIQNIGWIFFGTALSFCIYNNAIKPLVK.

The segment at 118-266 (FDYQSNFSDV…SDKVYQISSG (149 aa)) is SLFN-like fold. The helical transmembrane segment at 354-374 (LLDIQNIGWIFFGTALSFCIY) threads the bilayer.

This sequence belongs to the Schlafen family. As to quaternary structure, component of the PUCH (precursor of 21U RNA 5'-end cleavage holoenzyme) complex; consisting of tofu-1, tofu-2 and either slfl-3 or slfl-4. Within the complex, interacts (via N-terminus) with tofu-2 (via N-terminus); the presence of tofu-1 is required for the interaction.

Its subcellular location is the mitochondrion membrane. Its function is as follows. Component of the trimeric PUCH (precursor of 21U RNA 5'-end cleavage holoenzyme) complex, that acts as an endoribonuclease processing the 5'-end of precursor Piwi-interacting RNAs (piRNAs). The PUCH complex consists of tofu-1, tofu-2 and either slfl-3 or slfl-4, where tofu-2 exhibits endoribonuclease activity. PUCH-mediated processing strictly requires a 7-methyl-G cap (m7 G-cap) and an uracil at position three (U3). PUCH also exhibits a strict bias for piRNA precursors with an A or G at position 1. Mature piRNA production is enhanced by the interaction of PUCH with the PETISCO complex, which is stabilizing piRNA precursors and allows their processing by PUCH. In Caenorhabditis elegans, this protein is Schlafen-like protein 3.